The chain runs to 235 residues: 15,16-dihydrobiliverdin:ferredoxin oxidoreductase (235 aa).

It belongs to the HY2 family.

It catalyses the reaction 15,16-dihydrobiliverdin + oxidized 2[4Fe-4S]-[ferredoxin] = biliverdin IXalpha + reduced 2[4Fe-4S]-[ferredoxin] + 2 H(+). In terms of biological role, catalyzes the two-electron reduction of biliverdin IX-alpha at the C15 methine bridge. This chain is 15,16-dihydrobiliverdin:ferredoxin oxidoreductase, found in Synechococcus sp. (strain CC9902).